Here is a 452-residue protein sequence, read N- to C-terminus: 3-phosphoshikimate 1-carboxyvinyltransferase (452 aa).

A disordered region spans residues 1 to 23 (MLNGSASKPATARKSAGLTGSVR). K28, S29, and R33 together coordinate 3-phosphoshikimate. K28 contacts phosphoenolpyruvate. Positions 100 and 128 each coordinate phosphoenolpyruvate. 3-phosphoshikimate contacts are provided by S173, Q175, D326, and K353. Q175 provides a ligand contact to phosphoenolpyruvate. The active-site Proton acceptor is D326. Positions 357 and 405 each coordinate phosphoenolpyruvate.

It belongs to the EPSP synthase family. As to quaternary structure, monomer.

It is found in the cytoplasm. It carries out the reaction 3-phosphoshikimate + phosphoenolpyruvate = 5-O-(1-carboxyvinyl)-3-phosphoshikimate + phosphate. The protein operates within metabolic intermediate biosynthesis; chorismate biosynthesis; chorismate from D-erythrose 4-phosphate and phosphoenolpyruvate: step 6/7. Catalyzes the transfer of the enolpyruvyl moiety of phosphoenolpyruvate (PEP) to the 5-hydroxyl of shikimate-3-phosphate (S3P) to produce enolpyruvyl shikimate-3-phosphate and inorganic phosphate. This Rhizobium johnstonii (strain DSM 114642 / LMG 32736 / 3841) (Rhizobium leguminosarum bv. viciae) protein is 3-phosphoshikimate 1-carboxyvinyltransferase.